The sequence spans 321 residues: Tetraacyldisaccharide 4'-kinase (321 aa).

54 to 61 (SVGGTGKT) contributes to the ATP binding site.

The protein belongs to the LpxK family.

It carries out the reaction a lipid A disaccharide + ATP = a lipid IVA + ADP + H(+). It participates in glycolipid biosynthesis; lipid IV(A) biosynthesis; lipid IV(A) from (3R)-3-hydroxytetradecanoyl-[acyl-carrier-protein] and UDP-N-acetyl-alpha-D-glucosamine: step 6/6. In terms of biological role, transfers the gamma-phosphate of ATP to the 4'-position of a tetraacyldisaccharide 1-phosphate intermediate (termed DS-1-P) to form tetraacyldisaccharide 1,4'-bis-phosphate (lipid IVA). This Rickettsia typhi (strain ATCC VR-144 / Wilmington) protein is Tetraacyldisaccharide 4'-kinase.